We begin with the raw amino-acid sequence, 123 residues long: Holo-[acyl-carrier-protein] synthase (123 aa).

2 residues coordinate Mg(2+): Asp-8 and Glu-56.

This sequence belongs to the P-Pant transferase superfamily. AcpS family. The cofactor is Mg(2+).

The protein localises to the cytoplasm. It carries out the reaction apo-[ACP] + CoA = holo-[ACP] + adenosine 3',5'-bisphosphate + H(+). Transfers the 4'-phosphopantetheine moiety from coenzyme A to a Ser of acyl-carrier-protein. The protein is Holo-[acyl-carrier-protein] synthase of Clostridium botulinum (strain Eklund 17B / Type B).